A 236-amino-acid polypeptide reads, in one-letter code: MICOS complex subunit MIC25 (236 aa).

The segment covering 1–11 has biased composition (basic and acidic residues); the sequence is MGSAESREGRR. Positions 1–22 are disordered; sequence MGSAESREGRRASFGMDEEERV. Residue Gly2 is the site of N-myristoyl glycine attachment. Phosphoserine occurs at positions 13 and 31. 2 disordered regions span residues 34–86 and 109–132; these read VVNR…VQVD and EREAAASPRSVTLRRGEGGVDQEK. The segment covering 48 to 58 has biased composition (low complexity); sequence GLLAPPAAALG. 2 stretches are compositionally biased toward basic and acidic residues: residues 62-71 and 122-132; these read GREKDSKPPR and RRGEGGVDQEK. Residues 127–167 are a coiled coil; that stretch reads GVDQEKQRLAQRARELESQEEELRCRDAFYKEQLGRLERQN. The 42-residue stretch at 195-236 folds into the CHCH domain; it reads EPVCSGLQAQILRCYRDRLQEVLLCADLVRAYQHCVSSAHKG. 2 short sequence motifs (cx9C motif) span residues 198 to 208 and 219 to 229; these read CSGLQAQILRC and CADLVRAYQHC. Cystine bridges form between Cys198–Cys229 and Cys208–Cys219.

It belongs to the MICOS complex subunit Mic19 family. Metazoan Mic25 subfamily. In terms of assembly, component of the mitochondrial contact site and cristae organizing system (MICOS) complex, composed of at least MICOS10/MIC10, CHCHD3/MIC19, CHCHD6/MIC25, APOOL/MIC27, IMMT/MIC60, APOO/MIC23/MIC26 and MICOS13/MIC13. This complex was also known under the names MINOS or MitOS complex. The MICOS complex associates with mitochondrial outer membrane proteins SAMM50, MTX1 and MTX2 (together described as components of the mitochondrial outer membrane sorting assembly machinery (SAM) complex) and DNAJC11, mitochondrial inner membrane protein TMEM11 and with HSPA9. The MICOS and SAM complexes together with DNAJC11 are part of a large protein complex spanning both membranes termed the mitochondrial intermembrane space bridging (MIB) complex. Interacts with DISC1. Interacts with IMMT/MIC60.

Its subcellular location is the mitochondrion inner membrane. It localises to the mitochondrion. Component of the MICOS complex, a large protein complex of the mitochondrial inner membrane that plays crucial roles in the maintenance of crista junctions, inner membrane architecture, and formation of contact sites to the outer membrane. The polypeptide is MICOS complex subunit MIC25 (CHCHD6) (Bos taurus (Bovine)).